The chain runs to 343 residues: Zinc finger CCCH domain-containing protein 39 (343 aa).

Residues 114-147 (LSHLADAADEAAALRQENAELRVANNDLACRIAK) adopt a coiled-coil conformation. 2 consecutive C3H1-type zinc fingers follow at residues 268–296 (MFKTELCNKWEETGACPYGDQCQFAHGVA) and 306–334 (RYKTQVCRMVLAGGVCPYGHRCHFRHSIT).

The chain is Zinc finger CCCH domain-containing protein 39 from Oryza sativa subsp. japonica (Rice).